We begin with the raw amino-acid sequence, 238 residues long: Probable xyloglucan-specific endo-beta-1,4-glucanase A (238 aa).

The signal sequence occupies residues 1-18 (MKLSLSVALSLAASTAQA). 2 N-linked (GlcNAc...) asparagine glycosylation sites follow: Asn-106 and Asn-171.

This sequence belongs to the glycosyl hydrolase 12 (cellulase H) family.

It is found in the secreted. It catalyses the reaction xyloglucan + H2O = xyloglucan oligosaccharides.. Functionally, catalyzes endohydrolysis of 1,4-beta-D-glucosidic linkages in xyloglucan with retention of the beta-configuration of the glycosyl residues. Specific for xyloglucan and does not hydrolyze other cell wall components. The protein is Probable xyloglucan-specific endo-beta-1,4-glucanase A (xgeA) of Aspergillus fumigatus (strain ATCC MYA-4609 / CBS 101355 / FGSC A1100 / Af293) (Neosartorya fumigata).